The primary structure comprises 292 residues: MDFLNDHINVFGLIAALVILVLTIYESSSLIKEMRDSKSQGELMENGHLIDGIGEFANNVPVGWIASFMCTIVWAFWYFFFGYPLNSFSQIGQYNEEVKAHNQKFEAKWKNLGQKELVDMGQGIFLVHCSQCHGITAEGLHGSAQNLVRWGKEEGIMDTIKHGSKGMDYLAGEMPAMELDEKDAKAIASYVMAEISSVKKTKNPQLIDKGKELFESMGCTGCHGNDGKGLQENQVFAADLTAYGTENFLRNILTHGKKGNIGHMPSFKYKNFSDLQVKALAEFIQSLKPLED.

The next 2 membrane-spanning stretches (helical) occupy residues 11–31 (FGLIAALVILVLTIYESSSLI) and 62–82 (VGWIASFMCTIVWAFWYFFFG). 2 Cytochrome c domains span residues 116-195 (ELVD…MAEI) and 205-288 (QLID…QSLK). Residues cysteine 129, cysteine 132, histidine 133, methionine 174, cysteine 219, cysteine 222, histidine 223, and methionine 264 each coordinate heme c.

It belongs to the CcoP / FixP family. Component of the cbb3-type cytochrome c oxidase at least composed of CcoN, CcoO, CcoQ and CcoP. It depends on heme c as a cofactor.

It is found in the cell inner membrane. The protein operates within energy metabolism; oxidative phosphorylation. Functionally, C-type cytochrome. Part of the cbb3-type cytochrome c oxidase complex. CcoP subunit is required for transferring electrons from donor cytochrome c via its heme groups to CcoO subunit. From there, electrons are shuttled to the catalytic binuclear center of CcoN subunit where oxygen reduction takes place. The complex also functions as a proton pump. This Helicobacter pylori (strain 52) protein is Cbb3-type cytochrome c oxidase subunit CcoP.